The primary structure comprises 629 residues: tRNA uridine 5-carboxymethylaminomethyl modification enzyme MnmG (629 aa).

13 to 18 (GGGHAG) provides a ligand contact to FAD. 273–287 (GPRYCPSIEDKIHRF) lines the NAD(+) pocket.

The protein belongs to the MnmG family. In terms of assembly, homodimer. Heterotetramer of two MnmE and two MnmG subunits. FAD serves as cofactor.

Its subcellular location is the cytoplasm. NAD-binding protein involved in the addition of a carboxymethylaminomethyl (cmnm) group at the wobble position (U34) of certain tRNAs, forming tRNA-cmnm(5)s(2)U34. The chain is tRNA uridine 5-carboxymethylaminomethyl modification enzyme MnmG from Shewanella denitrificans (strain OS217 / ATCC BAA-1090 / DSM 15013).